The sequence spans 132 residues: uncharacterized protein (132 aa).

A helical transmembrane segment spans residues 10–30 (LVLFFTIILIALCPFVYYLWD). The stretch at 50-79 (KNCSTEIEHAIEEHKRKNKEKKEAKEKRLA) forms a coiled coil.

The protein resides in the membrane. This is an uncharacterized protein from Invertebrate iridescent virus 6 (IIV-6).